A 102-amino-acid chain; its full sequence is Putative toxin YafQ (102 aa).

The protein belongs to the RelE toxin family. YafQ subfamily.

Its function is as follows. Toxic component of a type II toxin-antitoxin (TA) system. Its cognate antitoxin is RelB. This is Putative toxin YafQ from Haemophilus influenzae (strain ATCC 51907 / DSM 11121 / KW20 / Rd).